A 229-amino-acid polypeptide reads, in one-letter code: Cytidylate kinase (229 aa).

An ATP-binding site is contributed by 12 to 20 (GPSGSGKGT).

Belongs to the cytidylate kinase family. Type 1 subfamily.

The protein resides in the cytoplasm. It catalyses the reaction CMP + ATP = CDP + ADP. The catalysed reaction is dCMP + ATP = dCDP + ADP. In Pseudomonas syringae pv. syringae (strain B728a), this protein is Cytidylate kinase.